The chain runs to 279 residues: Oxygen-dependent coproporphyrinogen-III oxidase (279 aa).

Residue Ser-102 participates in substrate binding. Residues His-106 and His-116 each contribute to the a divalent metal cation site. His-116 acts as the Proton donor in catalysis. A substrate-binding site is contributed by 118–120 (NTR). Positions 149 and 179 each coordinate a divalent metal cation. The tract at residues 244-279 (YVEFNLLYDRGTKFGLMTDGNVEAILMSLPPEVKFN) is important for dimerization.

The protein belongs to the aerobic coproporphyrinogen-III oxidase family. In terms of assembly, homodimer. Requires a divalent metal cation as cofactor.

The protein localises to the cytoplasm. The catalysed reaction is coproporphyrinogen III + O2 + 2 H(+) = protoporphyrinogen IX + 2 CO2 + 2 H2O. Its pathway is porphyrin-containing compound metabolism; protoporphyrin-IX biosynthesis; protoporphyrinogen-IX from coproporphyrinogen-III (O2 route): step 1/1. In terms of biological role, involved in the heme biosynthesis. Catalyzes the aerobic oxidative decarboxylation of propionate groups of rings A and B of coproporphyrinogen-III to yield the vinyl groups in protoporphyrinogen-IX. This is Oxygen-dependent coproporphyrinogen-III oxidase from Rickettsia felis (strain ATCC VR-1525 / URRWXCal2) (Rickettsia azadi).